A 327-amino-acid chain; its full sequence is GrpE protein homolog 2, mitochondrial (327 aa).

A mitochondrion-targeting transit peptide spans 1-39 (MLVLRILSRVTRNAGIRSSLSAVTLPARNQTPVFSSRFH). The tract at residues 68–140 (SSSTSPESDE…DSESDDDELS (73 aa)) is disordered. Composition is skewed to basic and acidic residues over residues 75-93 (SDEK…EKPT) and 103-113 (SESKDSVTDSA). Acidic residues predominate over residues 130 to 140 (SDSESDDDELS).

It belongs to the GrpE family. As to quaternary structure, probable component of the PAM complex, at least composed of SSC1 (mtHsp70), MGE1, TIM44, PAM16/TIM16, PAM17 and PAM18/TIM14. Interacts with SSQ1.

It localises to the mitochondrion matrix. In terms of biological role, essential component of the PAM complex, a complex required for the translocation of transit peptide-containing proteins from the inner membrane into the mitochondrial matrix in an ATP-dependent manner. Seems to control the nucleotide-dependent binding of mitochondrial HSP70 to substrate proteins. Binds ATP. Interacts with copper ions Cu(2+). Confers thermotolerance to long-term exposure at moderately high temperature (TMHT at 35 degrees Celsius). This is GrpE protein homolog 2, mitochondrial from Arabidopsis thaliana (Mouse-ear cress).